A 101-amino-acid polypeptide reads, in one-letter code: UPF0235 protein CJA_0091 (101 aa).

Belongs to the UPF0235 family.

In Cellvibrio japonicus (strain Ueda107) (Pseudomonas fluorescens subsp. cellulosa), this protein is UPF0235 protein CJA_0091.